Reading from the N-terminus, the 431-residue chain is NADH-quinone oxidoreductase chain 1 (431 aa).

Position 54–63 (54–63 (GRGGAGFPTG)) interacts with NAD(+). 167–214 (GAGAYICGEETALLESLEGKKGMPRMKPPFPAGAGLYGCPTTVNNVES) is a binding site for FMN. [4Fe-4S] cluster is bound by residues C346, C349, C352, and C392.

The protein belongs to the complex I 51 kDa subunit family. NDH-1 is composed of at least 14 different subunits, Nqo1 to Nqo14. The complex has a L-shaped structure, with the hydrophobic arm (subunits Nqo7, Nqo8, Nqo10 to Nqo14) embedded in the inner membrane and the hydrophilic peripheral arm (subunits Nqo1 to Nqo6, Nqo9) protruding into the bacterial cytoplasm. The hydrophilic domain contains all the redox centers. It depends on FMN as a cofactor. Requires [4Fe-4S] cluster as cofactor.

It localises to the cell inner membrane. The catalysed reaction is a quinone + NADH + 5 H(+)(in) = a quinol + NAD(+) + 4 H(+)(out). Its function is as follows. NDH-1 shuttles electrons from NADH, via FMN and iron-sulfur (Fe-S) centers, to quinones in the respiratory chain. The immediate electron acceptor for the enzyme in this species is believed to be ubiquinone. Couples the redox reaction to proton translocation (for every two electrons transferred, four hydrogen ions are translocated across the cytoplasmic membrane), and thus conserves the redox energy in a proton gradient. The polypeptide is NADH-quinone oxidoreductase chain 1 (nqo1) (Paracoccus denitrificans).